A 266-amino-acid chain; its full sequence is MFVELNNLLNTTPDRAEQGKLTLLCDAKTDGSFLVHHFLSFYLKANCKVCFVALIQSFSHYSIVGQKLGVSLTMARERGQLVFLEGLKSAVDVVFQAQKEPHPLQFLREANAGNLKPLFEFVREALKPVDSGEARWTYPVLLVDDLSVLLSLGMGAVAVLDFIHYCRATVCWELKGNMVVLVHDSGDAEDEENDILLNGLSHQSHLILRAEGLATGFCRDVHGQLRILWRRPSQPAVHRDQSFTYQYKIQDKSVSFFAKGMSPAVL.

It belongs to the ELP6 family. Component of the elongator complex which consists of ELP1, ELP2, ELP3, ELP4, ELP5 and ELP6.

The protein resides in the cytoplasm. Its subcellular location is the nucleus. The protein operates within tRNA modification; 5-methoxycarbonylmethyl-2-thiouridine-tRNA biosynthesis. Component of the elongator complex which is required for multiple tRNA modifications, including mcm5U (5-methoxycarbonylmethyl uridine), mcm5s2U (5-methoxycarbonylmethyl-2-thiouridine), and ncm5U (5-carbamoylmethyl uridine). The elongator complex catalyzes formation of carboxymethyluridine in the wobble base at position 34 in tRNAs. Involved in cell migration. This Homo sapiens (Human) protein is Elongator complex protein 6.